Reading from the N-terminus, the 177-residue chain is MLALLKQFSEKRFVWFLLAFSSLALESTALYFQYGMGLQPCVLCVYERLAMIGLFVAGTIALLQPRVFILRLIALALGLFSSIKGLLISFRHLDLQMNPAPWKQCEFIPNFPETLPFHQWFPFIFNPTGSCNESQWSLFGLTMVQWLVVIFSLYVVILTLLLIAQVIKTRKQRRLFN.

Residues 1-14 are Cytoplasmic-facing; it reads MLALLKQFSEKRFV. Residues 15–31 form a helical membrane-spanning segment; that stretch reads WFLLAFSSLALESTALY. The Periplasmic portion of the chain corresponds to 32–49; it reads FQYGMGLQPCVLCVYERL. Cysteines 41 and 44 form a disulfide. Residues 50–65 form a helical membrane-spanning segment; the sequence is AMIGLFVAGTIALLQP. At 66–72 the chain is on the cytoplasmic side; it reads RVFILRL. Residues 73–90 traverse the membrane as a helical segment; the sequence is IALALGLFSSIKGLLISF. Over 91-145 the chain is Periplasmic; it reads RHLDLQMNPAPWKQCEFIPNFPETLPFHQWFPFIFNPTGSCNESQWSLFGLTMVQ. Cysteines 105 and 131 form a disulfide. The chain crosses the membrane as a helical span at residues 146-164; it reads WLVVIFSLYVVILTLLLIA. At 165–177 the chain is on the cytoplasmic side; sequence QVIKTRKQRRLFN.

This sequence belongs to the DsbB family.

It is found in the cell inner membrane. Required for disulfide bond formation in some periplasmic proteins. Acts by oxidizing the DsbA protein. The sequence is that of Disulfide bond formation protein B from Haemophilus influenzae (strain ATCC 51907 / DSM 11121 / KW20 / Rd).